The sequence spans 140 residues: Large ribosomal subunit protein uL22c (140 aa).

This sequence belongs to the universal ribosomal protein uL22 family. Part of the 50S ribosomal subunit.

Its subcellular location is the plastid. It is found in the chloroplast. In terms of biological role, this protein binds specifically to 23S rRNA. Its function is as follows. The globular domain of the protein is located near the polypeptide exit tunnel on the outside of the subunit, while an extended beta-hairpin is found that lines the wall of the exit tunnel in the center of the 70S ribosome. This Calycanthus floridus var. glaucus (Eastern sweetshrub) protein is Large ribosomal subunit protein uL22c (rpl22).